A 478-amino-acid chain; its full sequence is Calcitonin receptor (478 aa).

An N-terminal signal peptide occupies residues 1–22; it reads MRFTFTRQFLAFFILISNPASI. At 23–146 the chain is on the extracellular side; sequence LPRSENLTFP…FTPEKLQNAY (124 aa). N-linked (GlcNAc...) asparagine glycans are attached at residues Asn-28, Asn-73, Asn-125, and Asn-130. 3 disulfides stabilise this stretch: Cys-55-Cys-81, Cys-72-Cys-112, and Cys-95-Cys-134. Residues 147 to 169 traverse the membrane as a helical segment; sequence VLYYLAIVGHSMSIITLVVSLGI. Residues 170-181 are Cytoplasmic-facing; sequence FVYFRSLGCQRV. A helical membrane pass occupies residues 182-202; sequence TLHKNMFLTYILNSMIIIIHL. Residues 203 to 219 are Extracellular-facing; sequence VEVVPNGELVRKDPVSC. Cys-219 and Cys-289 are disulfide-bonded. Residues 220 to 242 traverse the membrane as a helical segment; sequence KILHFFHQYMMACNYFWMLCEGI. Topologically, residues 243 to 259 are cytoplasmic; it reads YLHTLIVVSVFNEAKHL. A helical transmembrane segment spans residues 260 to 280; sequence RWYYLLGWGFPLVPTTIHAIT. Topologically, residues 281–296 are extracellular; that stretch reads RALYFNDNCWISVDTH. A helical membrane pass occupies residues 297 to 320; the sequence is LLYIIHGPVMVALVVNFFFLLNIV. The Cytoplasmic segment spans residues 321–340; that stretch reads RVLVTKMRETHEAESYMYLK. A helical transmembrane segment spans residues 341–359; it reads AVKATMILVPLLGIQFVVF. The Extracellular portion of the chain corresponds to 360-367; the sequence is PWRPSNKV. A helical transmembrane segment spans residues 368–394; that stretch reads LGKIYDYFMHSLIHFQGFFVATIYCFC. Residues 395–478 are Cytoplasmic-facing; that stretch reads NNEVQTTLKR…LNIIEKESSA (84 aa).

Belongs to the G-protein coupled receptor 2 family. In terms of assembly, heterodimer of CALCR and RAMP1, RAMP2 or RAMP3; the receptor complexes function as AMYR1, AMYR2 and AMYR3 receptors, respectively, and respond to amylin/IAPP, calcitonin/CT and CGRP1 ligands. Interacts with GPRASP2.

It localises to the cell membrane. In terms of biological role, g protein-coupled receptor activated by ligand peptides amylin (IAPP), calcitonin (CT/CALCA) and calcitonin gene-related peptide type 1 (CGRP1/CALCA). CALCR interacts with receptor-activity-modifying proteins RAMP1, 2 and 3 to form receptor complexes AMYR1, 2 and 3, respectively. IAPP, CT and CGRP1 activate CALCR and AMYRs with distinct modes of receptor activation resulting in specific phenotypes. Ligand binding causes a conformation change that triggers signaling via guanine nucleotide-binding proteins (G proteins) and modulates the activity of downstream effectors. Activates cAMP-dependent pathway. The sequence is that of Calcitonin receptor from Cavia porcellus (Guinea pig).